A 120-amino-acid polypeptide reads, in one-letter code: MKFISTFLTFILAAVSVTASSDEDIAQVPAEAIIGYLDFGGDHDIAFLPFSNATASGLLFINTTIAEAAEKEQNTTLAKREAVADAWHWLNLRPGQPMYKREANADAWHWLQLKPGQPMY.

The signal sequence occupies residues 1–21 (MKFISTFLTFILAAVSVTASS). 2 consecutive propeptides follow at residues 22–86 (DEDI…VADA) and 102–107 (EANADA).

Its function is as follows. The active factor is excreted into the culture medium by haploid cells of the alpha mating type and acts on cells of the opposite mating type (type A). It mediates the conjugation process between the two types by inhibiting the initiation of DNA synthesis in type a cells and synchronizing them with type alpha. The sequence is that of Mating factor alpha-2 (MF(ALPHA)2) from Saccharomyces cerevisiae (strain ATCC 204508 / S288c) (Baker's yeast).